The following is a 224-amino-acid chain: MKINLERLCRRLNYHFNNIAYLKQALTHCSAGSDNYERFEFLGDSILSFVIANELFNRFPLHSEGQLSRLRSFLVKGEMLAEIAREIGLGDYLFLGQGELRSGGFRRTSILADALEAILAAIYLDGGMTAAKQIILMLYSSRLDDPDLNHCLKDAKTQLQEFLQASKFALPEYVLTKIEGDEHAQIFHVTCTIEGVSQVAYGTGPNRRKAEQLAAKAMLEQLQG.

Positions 5 to 127 (LERLCRRLNY…ILAAIYLDGG (123 aa)) constitute an RNase III domain. Position 40 (Glu40) interacts with Mg(2+). The active site involves Asp44. Residues Asp113 and Glu116 each contribute to the Mg(2+) site. Glu116 is a catalytic residue. One can recognise a DRBM domain in the interval 154–224 (DAKTQLQEFL…AKAMLEQLQG (71 aa)).

Belongs to the ribonuclease III family. In terms of assembly, homodimer. Mg(2+) serves as cofactor.

Its subcellular location is the cytoplasm. It catalyses the reaction Endonucleolytic cleavage to 5'-phosphomonoester.. Digests double-stranded RNA. Involved in the processing of primary rRNA transcript to yield the immediate precursors to the large and small rRNAs (23S and 16S). Processes some mRNAs, and tRNAs when they are encoded in the rRNA operon. Processes pre-crRNA and tracrRNA of type II CRISPR loci if present in the organism. In Legionella pneumophila (strain Paris), this protein is Ribonuclease 3.